The primary structure comprises 444 residues: Acyl-CoA 6-desaturase (444 aa).

The Cytoplasmic portion of the chain corresponds to 1–131 (MGKGGNQGEG…DMNLFKTNHV (131 aa)). Positions 18–95 (VPTFSWEEIQ…LKPLLIGELA (78 aa)) constitute a Cytochrome b5 heme-binding domain. Residues 132 to 152 (FFLLLLAHIIALESIAWFTVF) form a helical membrane-spanning segment. Residues 153–157 (YFGNG) are Lumenal-facing. The chain crosses the membrane as a helical span at residues 158-178 (WIPTLITAFVLATSQAQAGWL). Topologically, residues 179–264 (QHDYGHLSVY…KYLPYNHQHE (86 aa)) are cytoplasmic. A Histidine box-1 motif is present at residues 180–184 (HDYGH). The Histidine box-2 motif lies at 217–221 (HFQHH). The helical transmembrane segment at 265 to 285 (YFFLIGPPLLIPMYFQYQIIM) threads the bilayer. The Lumenal segment spans residues 286–305 (TMIVHKNWVDLAWAVSYYIR). The helical transmembrane segment at 306 to 326 (FFITYIPFYGILGALLFLNFI) threads the bilayer. Over 327–444 (RFLESHWFVW…KLWLDAYLHK (118 aa)) the chain is Cytoplasmic. Residues 382-386 (QIEHH) carry the Histidine box-3 motif.

This sequence belongs to the fatty acid desaturase type 1 family. In terms of tissue distribution, expressed in a wide array of tissues, highest expression is found in liver followed by brain, lung, heart, and retina. A lower level is found in breast tumor when compared with normal tissues; lowest levels were found in patients with poor prognostic index.

It localises to the endoplasmic reticulum membrane. The enzyme catalyses (9Z,12Z)-octadecadienoyl-CoA + 2 Fe(II)-[cytochrome b5] + O2 + 2 H(+) = (6Z,9Z,12Z)-octadecatrienoyl-CoA + 2 Fe(III)-[cytochrome b5] + 2 H2O. The catalysed reaction is (9Z,12Z,15Z)-octadecatrienoyl-CoA + 2 Fe(II)-[cytochrome b5] + O2 + 2 H(+) = (6Z,9Z,12Z,15Z)-octadecatetraenoyl-CoA + 2 Fe(III)-[cytochrome b5] + 2 H2O. It carries out the reaction hexadecanoyl-CoA + 2 Fe(II)-[cytochrome b5] + O2 + 2 H(+) = (6Z)-hexadecenoyl-CoA + 2 Fe(III)-[cytochrome b5] + 2 H2O. It catalyses the reaction (9Z,12Z,15Z,18Z,21Z)-tetracosapentaenoyl-CoA + 2 Fe(II)-[cytochrome b5] + O2 + 2 H(+) = (6Z,9Z,12Z,15Z,18Z,21Z)-tetracosahexaenoyl-CoA + 2 Fe(III)-[cytochrome b5] + 2 H2O. The enzyme catalyses (11E)-octadecenoyl-CoA + 2 Fe(II)-[cytochrome b5] + O2 + 2 H(+) = (6Z,11E)-octadecadienoyl-CoA + 2 Fe(III)-[cytochrome b5] + 2 H2O. The catalysed reaction is (11Z,14Z)-eicosadienoyl-CoA + 2 Fe(II)-[cytochrome b5] + O2 + 2 H(+) = (8Z,11Z,14Z)-eicosatrienoyl-CoA + 2 Fe(III)-[cytochrome b5] + 2 H2O. It carries out the reaction (11Z,14Z,17Z)-eicosatrienoyl-CoA + 2 Fe(II)-[cytochrome b5] + O2 + 2 H(+) = (8Z,11Z,14Z,17Z)-eicosatetraenoyl-CoA + 2 Fe(III)-[cytochrome b5] + 2 H2O. Its pathway is lipid metabolism; polyunsaturated fatty acid biosynthesis. Functionally, involved in the biosynthesis of highly unsaturated fatty acids (HUFA) from the essential polyunsaturated fatty acids (PUFA) linoleic acid (LA) (18:2n-6) and alpha-linolenic acid (ALA) (18:3n-3) precursors, acting as a fatty acyl-coenzyme A (CoA) desaturase that introduces a cis double bond at carbon 6 of the fatty acyl chain. Catalyzes the first and rate limiting step in this pathway which is the desaturation of LA (18:2n-6) and ALA (18:3n-3) into gamma-linoleate (GLA) (18:3n-6) and stearidonate (18:4n-3), respectively. Subsequently, in the biosynthetic pathway of HUFA n-3 series, it desaturates tetracosapentaenoate (24:5n-3) to tetracosahexaenoate (24:6n-3), which is then converted to docosahexaenoate (DHA)(22:6n-3), an important lipid for nervous system function. Desaturates hexadecanate (palmitate) to produce 6Z-hexadecenoate (sapienate), a fatty acid unique to humans and major component of human sebum, that has been implicated in the development of acne and may have potent antibacterial activity. It can also desaturate (11E)-octadecenoate (trans-vaccenoate, the predominant trans fatty acid in human milk) at carbon 6 generating (6Z,11E)-octadecadienoate. In addition to Delta-6 activity, this enzyme exhibits Delta-8 activity with slight biases toward n-3 fatty acyl-CoA substrates. The polypeptide is Acyl-CoA 6-desaturase (Homo sapiens (Human)).